Consider the following 456-residue polypeptide: Riboflavin transporter RibZ (456 aa).

A run of 14 helical transmembrane segments spans residues 5–25 (WIVL…GSIL), 45–65 (WVVT…GKLG), 78–98 (FFIF…STLI), 105–125 (AVGA…AFPA), 134–154 (ITGA…GIIL), 158–178 (GWPS…FLGI), 192–212 (SFDI…LLAM), 220–240 (LYLG…EVKF), 260–280 (IIGV…PFYL), 289–309 (MMAG…APIA), 321–341 (ILTA…LLKA), 343–363 (SPLY…GAFS), 385–405 (FLAT…SSFF), and 428–448 (QSYW…VFFM).

Belongs to the major facilitator superfamily.

It is found in the cell membrane. Transports riboflavin into the cell. This is Riboflavin transporter RibZ from Clostridioides difficile (strain 630) (Peptoclostridium difficile).